Consider the following 396-residue polypeptide: Actin-related protein 6 (396 aa).

An N-acetylthreonine modification is found at threonine 2. Position 260 is an N6-acetyllysine (lysine 260).

The protein belongs to the actin family. ARP6 subfamily. In terms of assembly, component of the chromatin-remodeling SRCAP complex composed of at least SRCAP, DMAP1, RUVBL1, RUVBL2, ACTL6A, YEATS4, ACTR6 and ZNHIT1. Interacts with CBX1, CBX3 and CBX5.

It is found in the cytoplasm. The protein localises to the cytoskeleton. Its subcellular location is the nucleus. It localises to the nucleolus. Its function is as follows. Required for formation and/or maintenance of proper nucleolar structure and function. Plays a dual role in the regulation of ribosomal DNA (rDNA) transcription. In the presence of high glucose, maintains active rDNA transcription through H2A.Z deposition and under glucose starvation, is required for the repression of rDNA transcription, and this function may be independent of H2A.Z. The sequence is that of Actin-related protein 6 (Actr6) from Mus musculus (Mouse).